Reading from the N-terminus, the 598-residue chain is mRNA-capping enzyme (598 aa).

The TPase stretch occupies residues 1-215 (MSQTGAPPRW…GSASAPASEP (215 aa)). In terms of domain architecture, Tyrosine-protein phosphatase spans 25 to 183 (LPMKTMLGPR…FRRYGDVEDA (159 aa)). The active-site Phosphocysteine intermediate is C126. A disordered region spans residues 186 to 227 (APPLPEWCFDEDEEEDGEEDGSASAPASEPSSSHTGQSKKKK). The span at 193–206 (CFDEDEEEDGEEDG) shows a compositional bias: acidic residues. A compositionally biased stretch (low complexity) spans 207 to 218 (SASAPASEPSSS). The GTase stretch occupies residues 233-598 (GAVFLEGVSV…PKRSANSIPQ (366 aa)). Residue K298 is the N6-GMP-lysine intermediate of the active site. GTP contacts are provided by residues R303, R319, 347-349 (DGE), 462-464 (KWK), and 532-537 (RQRVDK). The segment at 575–598 (RKNPADSDLMPPPPPKRSANSIPQ) is disordered.

In the N-terminal section; belongs to the non-receptor class of the protein-tyrosine phosphatase family. It in the C-terminal section; belongs to the eukaryotic GTase family.

The protein localises to the nucleus. It carries out the reaction a 5'-end triphospho-ribonucleoside in mRNA + H2O = a 5'-end diphospho-ribonucleoside in mRNA + phosphate + H(+). The catalysed reaction is a 5'-end diphospho-ribonucleoside in mRNA + GTP + H(+) = a 5'-end (5'-triphosphoguanosine)-ribonucleoside in mRNA + diphosphate. Bifunctional mRNA-capping enzyme exhibiting RNA 5'-triphosphate monophosphatase activity in the N-terminal part and mRNA guanylyltransferase activity in the C-terminal part. Catalyzes the first two steps of cap formation: by removing the gamma-phosphate from the 5'-triphosphate end of nascent mRNA to yield a diphosphate end, and by transferring the GMP moiety of GTP to the 5'-diphosphate terminus of RNA via a covalent enzyme-GMP reaction intermediate. This Danio rerio (Zebrafish) protein is mRNA-capping enzyme (rngtt).